Reading from the N-terminus, the 295-residue chain is Sulfotransferase 1E1 (295 aa).

48–53 (KSGSTW) contacts 3'-phosphoadenylyl sulfate. A substrate-binding site is contributed by 106 to 108 (KTH). Histidine 108 acts as the Proton acceptor in catalysis. 3'-phosphoadenylyl sulfate is bound by residues arginine 130 and serine 138. Serine 156 carries the phosphoserine modification. Residues tyrosine 193, 227 to 232 (TSFQEM), and 257 to 259 (RKG) contribute to the 3'-phosphoadenylyl sulfate site.

The protein belongs to the sulfotransferase 1 family. Homodimer. In terms of tissue distribution, liver of young mature males and uterus.

It localises to the cytoplasm. It is found in the cytosol. It catalyses the reaction estrone + 3'-phosphoadenylyl sulfate = estrone 3-sulfate + adenosine 3',5'-bisphosphate + H(+). The catalysed reaction is (24S)-hydroxycholesterol + 3'-phosphoadenylyl sulfate = (24S)-hydroxycholesterol 3-sulfate + adenosine 3',5'-bisphosphate + H(+). It carries out the reaction 17beta-estradiol + 3'-phosphoadenylyl sulfate = 17beta-estradiol 3-sulfate + adenosine 3',5'-bisphosphate + H(+). The enzyme catalyses 3beta-hydroxyandrost-5-en-17-one + 3'-phosphoadenylyl sulfate = dehydroepiandrosterone 3-sulfate + adenosine 3',5'-bisphosphate + H(+). It catalyses the reaction 4-ethylphenol + 3'-phosphoadenylyl sulfate = 4-ethylphenyl sulfate + adenosine 3',5'-bisphosphate + H(+). Its activity is regulated as follows. Inhibited by estradiol. Functionally, sulfotransferase that utilizes 3'-phospho-5'-adenylyl sulfate (PAPS) as sulfonate donor to catalyze the sulfate conjugation of estradiol and estrone. Is a key enzyme in estrogen homeostasis, the sulfation of estrogens leads to their inactivation. Also sulfates dehydroepiandrosterone (DHEA), pregnenolone, (24S)-hydroxycholesterol and xenobiotic compounds like ethinylestradiol, equalenin, diethyl stilbesterol and 1-naphthol at significantly lower efficiency. Does not sulfonate cortisol, testosterone and dopamine. May play a role in gut microbiota-host metabolic interaction. O-sulfonates 4-ethylphenol (4-EP), a dietary tyrosine-derived metabolite produced by gut bacteria. The product 4-EPS crosses the blood-brain barrier and may negatively regulate oligodendrocyte maturation and myelination, affecting the functional connectivity of different brain regions associated with the limbic system. The polypeptide is Sulfotransferase 1E1 (Rattus norvegicus (Rat)).